We begin with the raw amino-acid sequence, 159 residues long: Keratin-associated protein 9-8 (159 aa).

Tandem repeats lie at residues 8–12 (CCQPT), 13–17 (CCRTT), 32–36 (CCQPS), 37–41 (CCVSS), 46–50 (CCRPT), 51–55 (CCQNT), 56–60 (CCQPI), 65–69 (CCQPS), 70–74 (CCSTP), 75–79 (CCQPT), 80–84 (CCGQT), 129–133 (CCRPA), 134–138 (CCETT), 139–142 (CCRT), and 153–157 (CCQPS). Residues 8–157 (CCQPTCCRTT…TCVSSCCQPS (150 aa)) form a 15 X 5 AA repeats of C-C-[RQVSGE]-[SPSNQ]-[TASPI] region.

This sequence belongs to the KRTAP type 9 family. Interacts with hair keratins.

Functionally, in the hair cortex, hair keratin intermediate filaments are embedded in an interfilamentous matrix, consisting of hair keratin-associated proteins (KRTAP), which are essential for the formation of a rigid and resistant hair shaft through their extensive disulfide bond cross-linking with abundant cysteine residues of hair keratins. The matrix proteins include the high-sulfur and high-glycine-tyrosine keratins. This chain is Keratin-associated protein 9-8 (KRTAP9-8), found in Homo sapiens (Human).